A 419-amino-acid chain; its full sequence is UDP-N-acetylglucosamine 1-carboxyvinyltransferase 2 (419 aa).

24–25 contacts phosphoenolpyruvate; sequence KN. Arg94 contacts UDP-N-acetyl-alpha-D-glucosamine. Residue Cys118 is the Proton donor of the active site. A 2-(S-cysteinyl)pyruvic acid O-phosphothioketal modification is found at Cys118. UDP-N-acetyl-alpha-D-glucosamine-binding positions include 123 to 127, Asp307, and Ile329; that span reads RPIDQ.

The protein belongs to the EPSP synthase family. MurA subfamily.

It localises to the cytoplasm. It carries out the reaction phosphoenolpyruvate + UDP-N-acetyl-alpha-D-glucosamine = UDP-N-acetyl-3-O-(1-carboxyvinyl)-alpha-D-glucosamine + phosphate. It participates in cell wall biogenesis; peptidoglycan biosynthesis. Its function is as follows. Cell wall formation. Adds enolpyruvyl to UDP-N-acetylglucosamine. The sequence is that of UDP-N-acetylglucosamine 1-carboxyvinyltransferase 2 from Staphylococcus aureus (strain bovine RF122 / ET3-1).